Consider the following 110-residue polypeptide: Phosphoribosyl-ATP pyrophosphatase (110 aa).

This sequence belongs to the PRA-PH family.

Its subcellular location is the cytoplasm. It catalyses the reaction 1-(5-phospho-beta-D-ribosyl)-ATP + H2O = 1-(5-phospho-beta-D-ribosyl)-5'-AMP + diphosphate + H(+). It functions in the pathway amino-acid biosynthesis; L-histidine biosynthesis; L-histidine from 5-phospho-alpha-D-ribose 1-diphosphate: step 2/9. In Pseudomonas syringae pv. tomato (strain ATCC BAA-871 / DC3000), this protein is Phosphoribosyl-ATP pyrophosphatase.